The sequence spans 556 residues: Formate--tetrahydrofolate ligase (556 aa).

65 to 72 contributes to the ATP binding site; the sequence is TPAGEGKS.

The protein belongs to the formate--tetrahydrofolate ligase family.

The enzyme catalyses (6S)-5,6,7,8-tetrahydrofolate + formate + ATP = (6R)-10-formyltetrahydrofolate + ADP + phosphate. Its pathway is one-carbon metabolism; tetrahydrofolate interconversion. This chain is Formate--tetrahydrofolate ligase, found in Streptococcus mutans serotype c (strain ATCC 700610 / UA159).